A 238-amino-acid chain; its full sequence is MGSEVWVGTWRPHRPRGPIAALYRGPGPKYKLPTNTGYKLHDPSRPRAPAFSFGSRPPLRHATCGPGPSYLVPARMTVRGTVGSPAFSIYGRLSHTAPVLTPGPGRYYPERARNVTYPSAPRHTIAPRNWGILAKQETPGPGSYTVPSLLGSRVISKVSAPTYSIYSRSPVGSCFEDLSKTPGPCAYHVVNPMIYKTRAPQFTMLGRTLPPRENTKKPGPASYSVDKVVWSRGSRGRG.

The STPGR repeat unit spans residues 182–207 (PGPCAYHVVNPMIYKTRAPQFTMLGR). The disordered stretch occupies residues 206–238 (GRTLPPRENTKKPGPASYSVDKVVWSRGSRGRG).

The protein belongs to the CIMAP family.

It localises to the cell projection. It is found in the cilium. Its subcellular location is the flagellum. The chain is Ciliary microtubule associated protein 1B (Cimap1b) from Mus musculus (Mouse).